The primary structure comprises 454 residues: 3-phosphoshikimate 1-carboxyvinyltransferase (454 aa).

Positions 39, 40, and 44 each coordinate 3-phosphoshikimate. Lys-39 contributes to the phosphoenolpyruvate binding site. Phosphoenolpyruvate contacts are provided by Gly-112 and Arg-140. 3-phosphoshikimate is bound by residues Ser-185, Gln-187, Asp-333, and Lys-360. Gln-187 lines the phosphoenolpyruvate pocket. Catalysis depends on Asp-333, which acts as the Proton acceptor. The phosphoenolpyruvate site is built by Arg-364 and Arg-405.

Belongs to the EPSP synthase family. As to quaternary structure, monomer.

It localises to the cytoplasm. The catalysed reaction is 3-phosphoshikimate + phosphoenolpyruvate = 5-O-(1-carboxyvinyl)-3-phosphoshikimate + phosphate. The protein operates within metabolic intermediate biosynthesis; chorismate biosynthesis; chorismate from D-erythrose 4-phosphate and phosphoenolpyruvate: step 6/7. Catalyzes the transfer of the enolpyruvyl moiety of phosphoenolpyruvate (PEP) to the 5-hydroxyl of shikimate-3-phosphate (S3P) to produce enolpyruvyl shikimate-3-phosphate and inorganic phosphate. This chain is 3-phosphoshikimate 1-carboxyvinyltransferase, found in Xylella fastidiosa (strain Temecula1 / ATCC 700964).